A 268-amino-acid polypeptide reads, in one-letter code: Ribosomal RNA small subunit methyltransferase A (268 aa).

6 residues coordinate S-adenosyl-L-methionine: N11, L13, G37, E58, D86, and N104.

This sequence belongs to the class I-like SAM-binding methyltransferase superfamily. rRNA adenine N(6)-methyltransferase family. RsmA subfamily.

Its subcellular location is the cytoplasm. The catalysed reaction is adenosine(1518)/adenosine(1519) in 16S rRNA + 4 S-adenosyl-L-methionine = N(6)-dimethyladenosine(1518)/N(6)-dimethyladenosine(1519) in 16S rRNA + 4 S-adenosyl-L-homocysteine + 4 H(+). Specifically dimethylates two adjacent adenosines (A1518 and A1519) in the loop of a conserved hairpin near the 3'-end of 16S rRNA in the 30S particle. May play a critical role in biogenesis of 30S subunits. This chain is Ribosomal RNA small subunit methyltransferase A, found in Campylobacter fetus subsp. fetus (strain 82-40).